The chain runs to 571 residues: Kelch-like protein 28 (571 aa).

One can recognise a BTB domain in the interval 35 to 102 (CDIILRVGDV…AYTGTVFISQ (68 aa)). Kelch repeat units follow at residues 284 to 331 (VLCA…VLDQ), 332 to 386 (KVYV…VLAG), 387 to 433 (ELYA…VLDG), 435 to 479 (IYAI…VMLG), 480 to 526 (FIFV…VIDN), and 528 to 570 (LYVV…GLTA).

The polypeptide is Kelch-like protein 28 (KLHL28) (Homo sapiens (Human)).